The sequence spans 197 residues: 3-isopropylmalate dehydratase small subunit (197 aa).

This sequence belongs to the LeuD family. LeuD type 1 subfamily. As to quaternary structure, heterodimer of LeuC and LeuD.

It carries out the reaction (2R,3S)-3-isopropylmalate = (2S)-2-isopropylmalate. The protein operates within amino-acid biosynthesis; L-leucine biosynthesis; L-leucine from 3-methyl-2-oxobutanoate: step 2/4. Its function is as follows. Catalyzes the isomerization between 2-isopropylmalate and 3-isopropylmalate, via the formation of 2-isopropylmaleate. The sequence is that of 3-isopropylmalate dehydratase small subunit from Acidothermus cellulolyticus (strain ATCC 43068 / DSM 8971 / 11B).